The chain runs to 553 residues: Chaperonin GroEL 1 (553 aa).

ATP is bound by residues 29-32 (TIGP), 86-90 (DGTTT), Gly413, 476-478 (NAL), and Asp492. Positions 521-542 (KPEPPAAPAPGGDPMGGMGGMG) are disordered. Residues 533–542 (DPMGGMGGMG) are compositionally biased toward gly residues.

The protein belongs to the chaperonin (HSP60) family. Forms a cylinder of 14 subunits composed of two heptameric rings stacked back-to-back. Interacts with the co-chaperonin GroES.

The protein resides in the cytoplasm. The catalysed reaction is ATP + H2O + a folded polypeptide = ADP + phosphate + an unfolded polypeptide.. Its function is as follows. Together with its co-chaperonin GroES, plays an essential role in assisting protein folding. The GroEL-GroES system forms a nano-cage that allows encapsulation of the non-native substrate proteins and provides a physical environment optimized to promote and accelerate protein folding. The chain is Chaperonin GroEL 1 from Synechococcus sp. (strain WH7803).